Here is a 323-residue protein sequence, read N- to C-terminus: Protein translocase subunit SecF (323 aa).

At 1–22 the chain is on the cytoplasmic side; sequence MAQEYTVEQLNHGRKVYDFMRW. A helical membrane pass occupies residues 23–43; sequence DYWAFGISGLLLIAAIVIMGV. Residues 44–142 are Periplasmic-facing; the sequence is RGFNWGLDFT…FVGPSVGADL (99 aa). Residues 143–163 form a helical membrane-spanning segment; the sequence is AQTGAMALMAALLSILVYVGF. Topologically, residues 164-170 are cytoplasmic; it reads RFEWRLA. A helical membrane pass occupies residues 171–191; the sequence is AGVVIALAHDVIITLGILSLF. The Periplasmic segment spans residues 192–196; it reads HIEID. Residues 197-217 form a helical membrane-spanning segment; sequence LTIVASLMSVIGYSLNDSIVV. Residues 218–247 lie on the Cytoplasmic side of the membrane; it reads SDRIRENFRKIRRGTPYEIFNVSLTQTLHR. A helical transmembrane segment spans residues 248-270; the sequence is TLITSGTTLMVILMLYLFGGPVL. Residues 271 to 280 are Periplasmic-facing; the sequence is EGFSLTMLIG. A helical membrane pass occupies residues 281–301; that stretch reads VSIGTASSIYVASALALKLGM. Residues 302 to 323 are Cytoplasmic-facing; sequence KREHMLQQKVEKEGADQPSILP.

The protein belongs to the SecD/SecF family. SecF subfamily. Forms a complex with SecD. Part of the essential Sec protein translocation apparatus which comprises SecA, SecYEG and auxiliary proteins SecDF-YajC and YidC.

The protein resides in the cell inner membrane. Its function is as follows. Part of the Sec protein translocase complex. Interacts with the SecYEG preprotein conducting channel. SecDF uses the proton motive force (PMF) to complete protein translocation after the ATP-dependent function of SecA. This chain is Protein translocase subunit SecF, found in Escherichia coli O157:H7.